Reading from the N-terminus, the 281-residue chain is MKMDSSSIRELRDRTGLGLSDCKKALEECDGDIKKAVDRLRTIGFAKADKKSDRVASDGLIAMCLAKNYGVLVKVNCETDFVARNEKFIALVSNLASIACQERCTSLDELKNAKYEDVGTVQEAIISGTSVLGEKLELSNLCYLETKDGIIAGYVHGDMHGLGKIGALVALQSSGDKQEIGKQIAMHVVAMKPEALSIDDLDQEKLNNERSIIEEQVKSLNKPEEVAKKIVDGRMAKYYEEVVLLEQKFIKDDKMKIADFIESSAVKLANYKLLTLDGANK.

Residues 79-82 (TDFV) form an involved in Mg(2+) ion dislocation from EF-Tu region.

It belongs to the EF-Ts family.

The protein resides in the cytoplasm. Functionally, associates with the EF-Tu.GDP complex and induces the exchange of GDP to GTP. It remains bound to the aminoacyl-tRNA.EF-Tu.GTP complex up to the GTP hydrolysis stage on the ribosome. In Wolbachia pipientis subsp. Culex pipiens (strain wPip), this protein is Elongation factor Ts.